A 196-amino-acid chain; its full sequence is GTP cyclohydrolase 1 (196 aa).

Residues cysteine 84, histidine 87, and cysteine 157 each contribute to the Zn(2+) site.

This sequence belongs to the GTP cyclohydrolase I family. In terms of assembly, toroid-shaped homodecamer, composed of two pentamers of five dimers.

It catalyses the reaction GTP + H2O = 7,8-dihydroneopterin 3'-triphosphate + formate + H(+). It participates in cofactor biosynthesis; 7,8-dihydroneopterin triphosphate biosynthesis; 7,8-dihydroneopterin triphosphate from GTP: step 1/1. The sequence is that of GTP cyclohydrolase 1 from Corynebacterium glutamicum (strain R).